A 332-amino-acid polypeptide reads, in one-letter code: D-2-hydroxyacid dehydrogenase (NAD(+)) (332 aa).

Residues Arg-237 and Glu-266 contribute to the active site. The active-site Proton donor is His-298.

The protein belongs to the D-isomer specific 2-hydroxyacid dehydrogenase family. As to quaternary structure, monomer.

It catalyses the reaction a (2R)-2-hydroxycarboxylate + NAD(+) = a 2-oxocarboxylate + NADH + H(+). The catalysed reaction is (2R)-hydroxy-4-methylpentanoate + NAD(+) = 4-methyl-2-oxopentanoate + NADH + H(+). Its pathway is amino-acid degradation; L-leucine degradation. In terms of biological role, involved in the reductive branch of L-leucine fermentation. Catalyzes the NADH-dependent reduction of 4-methyl-2-oxopentanoate (2-oxoisocaproate) to (R)-2-hydroxy-4-methylpentanoate ((R)-2-hydroxyisocaproate). For the reverse reaction, the enzyme accepts (R)- but not (S)-2-hydroxy-4-methylpentanoate. Can also use 2-oxopentanoate, 2-oxohexanoate and phenylpyruvate but not 2-oxoisovalerate and 2-oxobutyrate. Cannot use NADPH. The polypeptide is D-2-hydroxyacid dehydrogenase (NAD(+)) (Clostridioides difficile (Peptoclostridium difficile)).